The chain runs to 323 residues: rRNA 2'-O-methyltransferase fibrillarin (323 aa).

Residues 1–80 (MGFERGGRGG…AKGGAAGKKV (80 aa)) are disordered. An asymmetric dimethylarginine mark is found at Arg-5, Arg-8, Arg-12, Arg-16, Arg-23, Arg-26, Arg-30, Arg-34, Arg-41, Arg-47, Arg-49, Arg-53, Arg-57, Arg-62, Arg-64, and Arg-68. Residues 8–76 (RGGARGGGRG…ARGGAKGGAA (69 aa)) show a composition bias toward gly residues. S-adenosyl-L-methionine contacts are provided by residues 174–175 (TS), 193–194 (EF), 218–219 (DA), and 238–241 (DVAQ).

Belongs to the methyltransferase superfamily. Fibrillarin family. Component of box C/D small nucleolar ribonucleoprotein (snoRNP) particles. In terms of processing, by homology to other fibrillarins, some or all of the N-terminal domain arginines are modified to asymmetric dimethylarginine (DMA).

The protein resides in the nucleus. The protein localises to the nucleolus. The enzyme catalyses L-glutaminyl-[histone H2A] + S-adenosyl-L-methionine = N(5)-methyl-L-glutaminyl-[histone H2A] + S-adenosyl-L-homocysteine + H(+). In terms of biological role, S-adenosyl-L-methionine-dependent methyltransferase that has the ability to methylate both RNAs and proteins. Involved in pre-rRNA processing. Utilizes the methyl donor S-adenosyl-L-methionine to catalyze the site-specific 2'-hydroxyl methylation of ribose moieties in pre-ribosomal RNA. Site specificity is provided by a guide RNA that base pairs with the substrate. Methylation occurs at a characteristic distance from the sequence involved in base pairing with the guide RNA. Also acts as a protein methyltransferase by mediating methylation of 'Gln-105' of histone H2A (H2AQ105me), a modification that impairs binding of the FACT complex and is specifically present at 35S ribosomal DNA locus. This Neurospora crassa (strain ATCC 24698 / 74-OR23-1A / CBS 708.71 / DSM 1257 / FGSC 987) protein is rRNA 2'-O-methyltransferase fibrillarin (nop-1).